Here is a 207-residue protein sequence, read N- to C-terminus: MIGRLRGNLLEKQPPELLIEVSGIGYEVQMPMSCFYELPEVGSEAIIYTHYVVREDAQLLYGFNTKNERALFREVIKANGVGPKLGLAILSGMTAAQFVQSVEREDISTLVKLPGVGKKTAERLVVEMKDRLKGWGAGDLFTPATDAAPMDDGSEFITSPQSAVDEAVSALIALGYKPQQASKTVSQIAKPDMTSEVLIRESLKSMI.

Residues 1-64 form a domain I region; that stretch reads MIGRLRGNLL…EDAQLLYGFN (64 aa). The tract at residues 65 to 143 is domain II; the sequence is TKNERALFRE…GWGAGDLFTP (79 aa). Residues 144–158 form a flexible linker region; that stretch reads ATDAAPMDDGSEFIT. Positions 159–207 are domain III; it reads SPQSAVDEAVSALIALGYKPQQASKTVSQIAKPDMTSEVLIRESLKSMI.

The protein belongs to the RuvA family. Homotetramer. Forms an RuvA(8)-RuvB(12)-Holliday junction (HJ) complex. HJ DNA is sandwiched between 2 RuvA tetramers; dsDNA enters through RuvA and exits via RuvB. An RuvB hexamer assembles on each DNA strand where it exits the tetramer. Each RuvB hexamer is contacted by two RuvA subunits (via domain III) on 2 adjacent RuvB subunits; this complex drives branch migration. In the full resolvosome a probable DNA-RuvA(4)-RuvB(12)-RuvC(2) complex forms which resolves the HJ.

The protein localises to the cytoplasm. The RuvA-RuvB-RuvC complex processes Holliday junction (HJ) DNA during genetic recombination and DNA repair, while the RuvA-RuvB complex plays an important role in the rescue of blocked DNA replication forks via replication fork reversal (RFR). RuvA specifically binds to HJ cruciform DNA, conferring on it an open structure. The RuvB hexamer acts as an ATP-dependent pump, pulling dsDNA into and through the RuvAB complex. HJ branch migration allows RuvC to scan DNA until it finds its consensus sequence, where it cleaves and resolves the cruciform DNA. This chain is Holliday junction branch migration complex subunit RuvA, found in Aliivibrio fischeri (strain ATCC 700601 / ES114) (Vibrio fischeri).